The primary structure comprises 214 residues: Ribonuclease HII (214 aa).

In terms of domain architecture, RNase H type-2 spans 26–214 (EIVCGVDEAG…PVRAALDLIR (189 aa)). A divalent metal cation is bound by residues D32, E33, and D124.

The protein belongs to the RNase HII family. Mn(2+) serves as cofactor. Mg(2+) is required as a cofactor.

The protein resides in the cytoplasm. The catalysed reaction is Endonucleolytic cleavage to 5'-phosphomonoester.. Functionally, endonuclease that specifically degrades the RNA of RNA-DNA hybrids. The sequence is that of Ribonuclease HII from Burkholderia orbicola (strain MC0-3).